Here is a 281-residue protein sequence, read N- to C-terminus: Type VI secretion system accessory component TagJ (281 aa).

In terms of assembly, interacts with TssB1 (via N-terminus). Interacts with ClpV1.

Functionally, component of the H1 type VI (H1-T6SS) secretion system that plays a role in the release of toxins targeting both eukaryotic and prokaryotic species. Forms a stable complex with TssB1. This complex, although not crucial for the H1-T6SS function, may fine-tune the assembly of the system. Plays a role in the interaction between ClpV1 and the TssC1/TssB1 sheath. The protein is Type VI secretion system accessory component TagJ of Pseudomonas aeruginosa (strain ATCC 15692 / DSM 22644 / CIP 104116 / JCM 14847 / LMG 12228 / 1C / PRS 101 / PAO1).